Here is a 3312-residue protein sequence, read N- to C-terminus: Cadherin EGF LAG seven-pass G-type receptor 3 (3312 aa).

A signal peptide spans 1–32 (MMARRPPWRGLGGRSTPILLLLLLSLFPLSQE). Residues 33–2540 (ELGGGGHQGW…RLEGDLELLA (2508 aa)) lie on the Extracellular side of the membrane. Disordered stretches follow at residues 90–112 (GRRQ…LGIE), 143–199 (GRTG…RKRV), and 212–306 (GSKG…EARK). The span at 159-173 (SSGVPGSGNSSPLPS) shows a compositional bias: low complexity. A compositionally biased stretch (pro residues) spans 290-299 (RPGPRPPGLP). Cadherin domains are found at residues 326-433 (PQYN…SPVF), 434-545 (EQAQ…APQF), 546-651 (SEKR…IPIF), 652-756 (VSTP…RPEF), 757-858 (TMKE…RPVF), 859-961 (QSAH…APQF), 962-1067 (VASH…APVF), 1068-1169 (PAEE…SPVL), and 1170-1265 (NNFQ…RVVI). Residue N632 is glycosylated (N-linked (GlcNAc...) asparagine). Residue N847 is glycosylated (N-linked (GlcNAc...) asparagine). N-linked (GlcNAc...) asparagine glycosylation is found at N1182, N1222, N1317, and N1327. Residues 1375–1433 (DDNVCLREPCENYMKCVSVLRFDSSAPFLASASTLFRPIQPIAGLRCRCPPGFTGDFCE) enclose the EGF-like 1; calcium-binding domain. Intrachain disulfides connect C1379–C1390, C1384–C1421, C1423–C1432, C1439–C1450, C1444–C1459, C1461–C1470, C1479–C1490, C1484–C1500, and C1502–C1513. The EGF-like 2; calcium-binding domain occupies 1435 to 1471 (ELDLCYSNPCRNGGACARREGGYTCVCRPRFTGEDCE). One can recognise an EGF-like 3; calcium-binding domain in the interval 1475-1514 (EAGRCVPGVCRNGGTCTDAPNGGFRCQCPAGGAFEGPRCE). One can recognise a Laminin G-like 1 domain in the interval 1515–1719 (VAARSFPPSS…VANNGTMAGC (205 aa)). Residues N1649 and N1713 are each glycosylated (N-linked (GlcNAc...) asparagine). Disulfide bonds link C1693–C1719, C1726–C1737, C1731–C1746, and C1748–C1757. Residues 1722 to 1758 (KLHFCDSGPCKNSGFCSERWGSFSCDCPVGFGGKDCQ) form the EGF-like 4; calcium-binding domain. One can recognise a Laminin G-like 2 domain in the interval 1764-1944 (PHHFRGNGTL…SHRVNAEPGC (181 aa)). The N-linked (GlcNAc...) asparagine glycan is linked to N1770. 9 disulfides stabilise this stretch: C1915/C1944, C1950/C1961, C1955/C1970, C1972/C1981, C1985/C1996, C1990/C2008, C2010/C2019, C2027/C2040, and C2042/C2052. Residues 1946 to 1982 (VTNACASGPCPPHADCRDLWQTFSCTCQPGYYGPGCV) enclose the EGF-like 5; calcium-binding domain. At D1963 the chain carries (3R)-3-hydroxyaspartate. The EGF-like 6; calcium-binding domain maps to 1983–2020 (DACLLNPCQNQGSCRHLPGAPHGYTCDCVGGYFGHHCE). The EGF-like 7; calcium-binding domain occupies 2021-2053 (HRMDQQCPRGWWGSPTCGPCNCDVHKGFDPNCN). N2053 is a glycosylation site (N-linked (GlcNAc...) asparagine). Residues 2055–2090 (TNGQCHCKEFHYRPRGSDSCLPCDCYPVGSTSRSCA) enclose the EGF-like 8; calcium-binding domain. 5 disulfides stabilise this stretch: C2059-C2074, C2061-C2077, C2079-C2089, C2098-C2107, and C2110-C2122. Residues 2077–2124 (CDCYPVGSTSRSCAPHSGQCPCRPGALGRQCNSCDSPFAEVTASGCRV) form the Laminin EGF-like domain. Phosphotyrosine is present on Y2126. N-linked (GlcNAc...) asparagine glycosylation is found at N2177, N2196, N2386, N2474, and N2506. The disordered stretch occupies residues 2361–2399 (THVLLPSQSPRPSPSEVLPTSSSIENSTTSSVVPPPAPP). Positions 2368–2530 (QSPRPSPSEV…GVLMDASPRE (163 aa)) constitute a GAIN-B domain. Residues 2380–2391 (TSSSIENSTTSS) show a composition bias toward low complexity. 2 disulfides stabilise this stretch: C2480–C2512 and C2500–C2514. Positions 2480-2530 (CVQWDPPGLAEQHGVWTARDCELVHRNGSHARCRCSRTGTFGVLMDASPRE) are GPS. A helical transmembrane segment spans residues 2541-2561 (VFTHVVVAVSVAALVLTAAIL). Topologically, residues 2562–2572 (LSLRSLKSNVR) are cytoplasmic. A helical membrane pass occupies residues 2573-2593 (GIHANVAAALGVAELLFLLGI). Topologically, residues 2594 to 2601 (HRTHNQLV) are extracellular. A helical transmembrane segment spans residues 2602 to 2622 (CTAVAILLHYFFLSTFAWLFV). At 2623 to 2643 (QGLHLYRMQVEPRNVDRGAMR) the chain is on the cytoplasmic side. Residues 2644–2664 (FYHALGWGVPAVLLGLAVGLD) traverse the membrane as a helical segment. Topologically, residues 2665–2681 (PEGYGNPDFCWISVHEP) are extracellular. The chain crosses the membrane as a helical span at residues 2682 to 2702 (LIWSFAGPVVLVIVMNGTMFL). Residues 2703–2725 (LAARTSCSTGQREAKKTSALTLR) are Cytoplasmic-facing. The helical transmembrane segment at 2726-2746 (SSFLLLLLVSASWLFGLLAVN) threads the bilayer. Topologically, residues 2747–2753 (HSILAFH) are extracellular. A helical transmembrane segment spans residues 2754 to 2774 (YLHAGLCGLQGLAVLLLFCVL). Residues 2775 to 3312 (NADARAAWMP…SEVPRSEGHS (538 aa)) are Cytoplasmic-facing. 2 disordered regions span residues 2888-2927 (AGAD…QRPL) and 2978-3006 (TSKD…AQRQ). The span at 2890–2900 (ADSDSDSDLSL) shows a compositional bias: acidic residues. Phosphotyrosine is present on Y3051. Disordered regions lie at residues 3086–3243 (EEAP…TEQL) and 3256–3312 (SALS…EGHS). Phosphoserine is present on S3097. Composition is skewed to low complexity over residues 3175 to 3198 (SPQR…SRSS), 3256 to 3265 (SALSSVQSSS), and 3272 to 3281 (TTATPSATAS). Residues 3287 to 3300 (TPRSATSHSISELS) are compositionally biased toward polar residues.

It belongs to the G-protein coupled receptor 2 family. LN-TM7 subfamily.

Its subcellular location is the cell membrane. Receptor that may have an important role in cell/cell signaling during nervous system formation. This chain is Cadherin EGF LAG seven-pass G-type receptor 3 (CELSR3), found in Homo sapiens (Human).